We begin with the raw amino-acid sequence, 1275 residues long: Histone-lysine N-methyltransferase PRDM16 (1275 aa).

Residues 1-10 are compositionally biased toward basic residues; the sequence is MRSKARARKL. The interval 1 to 66 is disordered; it reads MRSKARARKL…SEDFTPKEGS (66 aa). Residues 82 to 211 enclose the SET domain; sequence PDFELRESSI…PGEELLVHVK (130 aa). Residues 230–255 form a C2H2-type 1; degenerate zinc finger; the sequence is FRCDECDELFQCRLDLRRHKKYACSS. 5 C2H2-type zinc fingers span residues 282–304, 310–332, 338–361, 367–389, and 395–417; these read HECK…MIVH, YKCD…QMSH, FECE…RSQH, HACP…KHIH, and FICE…KRMH. A C2H2-type 7; atypical zinc finger spans residues 424-446; sequence IKCKDCGQMFSTTSSLNKHRRFC. 2 disordered regions span residues 592–658 and 789–838; these read VKNR…VPPG and APKV…GVSE. Over residues 610–625 the composition is skewed to low complexity; sequence TTTGTDLDTTTGTGSD. Basic and acidic residues-rich tracts occupy residues 631 to 648 and 821 to 835; these read DSDR…ESKP and REPR…RKPG. The tract at residues 680-1038 is interaction with CTBP1, CTBP2 and ZNF516; the sequence is EEQLLTASGA…KHEHEGAPVS (359 aa). Residues 740 to 1275 form a mediates interaction with SKI and regulation of TGF-beta signaling region; sequence PFTDRALAHN…SGAFNPINHL (536 aa). 3 consecutive C2H2-type zinc fingers follow at residues 951–973, 979–1002, and 1008–1030; these read YTCR…LRTH, YRCK…RNIH, and FKCH…LKKH. Disordered stretches follow at residues 1027-1065 and 1084-1169; these read LKKH…HALL and EMNQ…MGFD. Residues 1038–1058 show a composition bias toward polar residues; sequence SQHSGVLTNHLGTSASSPTSE. Residues 1117–1133 show a composition bias toward acidic residues; the sequence is DVEEEEEEELEEEDDDS.

The protein belongs to the PRDM16 family. In terms of assembly, interacts with CEBPA, CEBPB and CEBPD; the interaction is direct. Interacts with PPARG and PPARA; controls brown adipocytes. Interacts with CTBP1 and CTBP2; represses the expression of WAT-specific genes. Interacts with PPARGC1A and PPARGC1B; interaction with PPARGC1A or PPARGC1B activates the transcription of BAT-specific gene. Interacts with HDAC1, SKI and SMAD2; the interaction with SKI promotes the recruitment of SMAD3-HDAC1 complex on the promoter of TGF-beta target genes. Interacts with ZNF516; the interaction is direct and may play a role in the transcription of brown adipose tissue-specific gene. In terms of tissue distribution, enriched in BAT compared to WAT. Detected in heart, lung, kidney and brain. Expressed in nuclei of cardiomyocytes.

It is found in the nucleus. The protein localises to the cytoplasm. The enzyme catalyses L-lysyl(9)-[histone H3] + S-adenosyl-L-methionine = N(6)-methyl-L-lysyl(9)-[histone H3] + S-adenosyl-L-homocysteine + H(+). In terms of biological role, binds DNA and functions as a transcriptional regulator. Displays histone methyltransferase activity and monomethylates 'Lys-9' of histone H3 (H3K9me1) in vitro. Probably catalyzes the monomethylation of free histone H3 in the cytoplasm which is then transported to the nucleus and incorporated into nucleosomes where SUV39H methyltransferases use it as a substrate to catalyze histone H3 'Lys-9' trimethylation. Likely to be one of the primary histone methyltransferases along with MECOM/PRDM3 that direct cytoplasmic H3K9me1 methylation. Functions in the differentiation of brown adipose tissue (BAT) which is specialized in dissipating chemical energy in the form of heat in response to cold or excess feeding while white adipose tissue (WAT) is specialized in the storage of excess energy and the control of systemic metabolism. Together with CEBPB, regulates the differentiation of myoblastic precursors into brown adipose cells. Functions as a repressor of TGF-beta signaling. In Mus musculus (Mouse), this protein is Histone-lysine N-methyltransferase PRDM16.